An 876-amino-acid chain; its full sequence is Alanine--tRNA ligase (876 aa).

Residues His-565, His-569, Cys-667, and His-671 each contribute to the Zn(2+) site.

This sequence belongs to the class-II aminoacyl-tRNA synthetase family. Zn(2+) is required as a cofactor.

It localises to the cytoplasm. It catalyses the reaction tRNA(Ala) + L-alanine + ATP = L-alanyl-tRNA(Ala) + AMP + diphosphate. Functionally, catalyzes the attachment of alanine to tRNA(Ala) in a two-step reaction: alanine is first activated by ATP to form Ala-AMP and then transferred to the acceptor end of tRNA(Ala). Also edits incorrectly charged Ser-tRNA(Ala) and Gly-tRNA(Ala) via its editing domain. This is Alanine--tRNA ligase from Staphylococcus aureus (strain MRSA252).